A 359-amino-acid chain; its full sequence is Serpentine receptor class epsilon-33 (359 aa).

The next 7 helical transmembrane spans lie at 29–49, 65–85, 134–156, 168–188, 194–214, 255–275, and 285–305; these read VIIS…VNVS, ILAL…FITI, YMYS…SVLI, PAIL…GLLF, LSAH…YVFV, LVFA…ALHY, and LIEN…MLSI.

This sequence belongs to the nematode receptor-like protein sre family.

The protein resides in the membrane. The polypeptide is Serpentine receptor class epsilon-33 (sre-33) (Caenorhabditis elegans).